The sequence spans 200 residues: Dual specificity tyrosine-phosphorylation-regulated kinase 1A (200 aa).

Phosphotyrosine; by autocatalysis is present on Tyr-41. Lys-58 serves as a coordination point for ATP. Position 76 is a phosphotyrosine; by autocatalysis (Tyr-76). Ser-88 is modified (phosphoserine; by autocatalysis). Thr-122 carries the post-translational modification Phosphothreonine; by autocatalysis.

Belongs to the protein kinase superfamily. CMGC Ser/Thr protein kinase family. MNB/DYRK subfamily. As to quaternary structure, interacts with RAD54L2/ARIP4. Interacts with CRY2. Interacts with RANBP9. Interacts with WDR68. Interacts with SIRT1. Post-translationally, can also autophosphorylate on serine and threonine residues (in vitro). Autophosphorylated on numerous tyrosine residues.

The protein resides in the nucleus. It carries out the reaction L-tyrosyl-[protein] + ATP = O-phospho-L-tyrosyl-[protein] + ADP + H(+). The catalysed reaction is L-seryl-[protein] + ATP = O-phospho-L-seryl-[protein] + ADP + H(+). It catalyses the reaction L-threonyl-[protein] + ATP = O-phospho-L-threonyl-[protein] + ADP + H(+). The enzyme catalyses [DNA-directed RNA polymerase] + ATP = phospho-[DNA-directed RNA polymerase] + ADP + H(+). Its activity is regulated as follows. Inhibited by RANBP9. Dual-specificity kinase which possesses both serine/threonine and tyrosine kinase activities. Exhibits a substrate preference for proline at position P+1 and arginine at position P-3. Plays an important role in double-strand breaks (DSBs) repair following DNA damage. Mechanistically, phosphorylates RNF169 and increases its ability to block accumulation of TP53BP1 at the DSB sites thereby promoting homologous recombination repair (HRR). Also acts as a positive regulator of transcription by acting as a CTD kinase that mediates phosphorylation of the CTD (C-terminal domain) of the large subunit of RNA polymerase II (RNAP II) POLR2A. May play a role in a signaling pathway regulating nuclear functions of cell proliferation. Modulates alternative splicing by phosphorylating the splice factor SRSF6. Has pro-survival function and negatively regulates the apoptotic process. Promotes cell survival upon genotoxic stress through phosphorylation of SIRT1. This in turn inhibits p53/TP53 activity and apoptosis. Phosphorylates SEPTIN4, SEPTIN5 and SF3B1 at 'Thr-434'. The sequence is that of Dual specificity tyrosine-phosphorylation-regulated kinase 1A from Oryctolagus cuniculus (Rabbit).